A 531-amino-acid polypeptide reads, in one-letter code: Calcium-dependent protein kinase 21 (531 aa).

Over residues 1–10 (MGCFSSKHRK) the composition is skewed to basic residues. The interval 1 to 62 (MGCFSSKHRK…STPSSNPVSV (62 aa)) is disordered. Gly-2 carries N-myristoyl glycine lipidation. Residues 48-60 (IHQQISTPSSNPV) are compositionally biased toward polar residues. Positions 80-338 (YSLGKELGRG…AAQVLEHPWI (259 aa)) constitute a Protein kinase domain. Residues 86 to 94 (LGRGQFGIT) and Lys-109 each bind ATP. Asp-204 acts as the Proton acceptor in catalysis. Ser-244 is modified (phosphoserine). Positions 343–373 (APDKPIDSAVLSRMKQFRAMNKLKKLALKVI) are autoinhibitory domain. 4 consecutive EF-hand domains span residues 380–415 (EEIK…LGSR), 416–451 (LSET…RYKL), 452–487 (DRDE…YGMG), and 488–522 (DEAS…GSTQ). Residues Asp-393, Asp-395, Ser-397, Thr-399, Glu-404, Asp-429, Asp-431, Asn-433, Thr-435, Glu-440, Asp-465, Asp-467, Ser-469, His-471, Glu-476, Asp-500, Asp-502, Asp-504, Arg-506, and Glu-511 each contribute to the Ca(2+) site.

Belongs to the protein kinase superfamily. Ser/Thr protein kinase family. CDPK subfamily. In terms of assembly, interacts with SLAC1 and ABI1.

The protein localises to the cell membrane. It carries out the reaction L-seryl-[protein] + ATP = O-phospho-L-seryl-[protein] + ADP + H(+). The catalysed reaction is L-threonyl-[protein] + ATP = O-phospho-L-threonyl-[protein] + ADP + H(+). With respect to regulation, activated by calcium. Autophosphorylation may play an important role in the regulation of the kinase activity. In terms of biological role, may play a role in signal transduction pathways that involve calcium as a second messenger. Mediates the phosphorylation and activation of the S-type anion efflux channel SLAC1. This is Calcium-dependent protein kinase 21 (CPK21) from Arabidopsis thaliana (Mouse-ear cress).